A 204-amino-acid chain; its full sequence is ADP-ribosylation factor-like protein 15 (204 aa).

Residues G39–T46, E82–A86, and N142–D145 each bind GTP.

This sequence belongs to the small GTPase superfamily. Arf family.

This chain is ADP-ribosylation factor-like protein 15 (ARL15), found in Pongo abelii (Sumatran orangutan).